The sequence spans 337 residues: P2Y purinoceptor 14 (337 aa).

The Extracellular segment spans residues 1–28 (MNATSVPPAEGSCPSNALITKQIIPMLY). Asparagine 2 is a glycosylation site (N-linked (GlcNAc...) asparagine). Residues 29-49 (FVVFVAGILLNGMSGWVFFYV) traverse the membrane as a helical segment. The Cytoplasmic portion of the chain corresponds to 50 to 54 (PSSKS). The helical transmembrane segment at 55-75 (FIVYLKNIVIADFLMSLTFPF) threads the bilayer. At 76–95 (KILGDLGLGLWQVKVFVCRV) the chain is on the extracellular side. A disulfide bridge connects residues cysteine 93 and cysteine 171. The chain crosses the membrane as a helical span at residues 96 to 116 (SAVLFYINMYVSIVFFGLIGF). Residues 117-138 (DRYYKIVKPLLTSFIQSISYSK) are Cytoplasmic-facing. A helical membrane pass occupies residues 139 to 159 (LLSVLVWSLTLLIALPNMILT). The Extracellular portion of the chain corresponds to 160–187 (NRNVTEATRVKCMDLKSDLGLKWHKASS). Asparagine 162 carries N-linked (GlcNAc...) asparagine glycosylation. The chain crosses the membrane as a helical span at residues 188–208 (YIFVGIFWIVFLSLIIFYTAI). The Cytoplasmic segment spans residues 209-233 (TKKIFKSHFKSRKNSVSVKKKSSRN). A helical membrane pass occupies residues 234 to 254 (IFSIMFVFFICFVPYHIARIP). Over 255 to 277 (YTQSQTEAHYSCQSKQILFYVKE) the chain is Extracellular. Residues 278-298 (FSLLLSAANVCLDPIIYFFLC) traverse the membrane as a helical segment. At 299–337 (QPFREVLCKKLHIQLKTQHDSETSKIKRENIIQESTDTL) the chain is on the cytoplasmic side.

This sequence belongs to the G-protein coupled receptor 1 family.

The protein resides in the cell membrane. Functionally, receptor for UDP-glucose and other UDP-sugar coupled to G-proteins. Not activated by ATP, ADP, UTP or ATP. This is P2Y purinoceptor 14 (P2RY14) from Bos taurus (Bovine).